The primary structure comprises 138 residues: Basic phospholipase A2 homolog Ts-K49a (138 aa).

Residues 1–16 form the signal peptide; that stretch reads MRTLWIMAVLLLGVEG. 7 disulfides stabilise this stretch: C42–C131, C44–C60, C59–C111, C65–C138, C66–C104, C73–C97, and C91–C102. The interval 121 to 133 is important for membrane-damaging activities in eukaryotes and bacteria; heparin-binding; sequence KKKKINLKLFCKK.

In terms of tissue distribution, expressed by the venom gland.

The protein resides in the secreted. Functionally, snake venom phospholipase A2 homolog that lacks catalytic activity. It shows myotoxic and weak anticoagulant activities and induces local edema a few hours after injection (5-10 ug) in the hind paw. A model of myotoxic mechanism has been proposed: an apo Lys49-PLA2 is activated by the entrance of a hydrophobic molecule (e.g. fatty acid) at the hydrophobic channel of the protein leading to a reorientation of a monomer. This reorientation causes a transition between 'inactive' to 'active' states, causing alignment of C-terminal and membrane-docking sites (MDoS) side-by-side and putting the membrane-disruption sites (MDiS) in the same plane, exposed to solvent and in a symmetric position for both monomers. The MDoS region stabilizes the toxin on membrane by the interaction of charged residues with phospholipid head groups. Subsequently, the MDiS region destabilizes the membrane with penetration of hydrophobic residues. This insertion causes a disorganization of the membrane, allowing an uncontrolled influx of ions (i.e. calcium and sodium), and eventually triggering irreversible intracellular alterations and cell death. The sequence is that of Basic phospholipase A2 homolog Ts-K49a from Trimeresurus stejnegeri (Chinese green tree viper).